A 418-amino-acid polypeptide reads, in one-letter code: MFHNTCGRKGRFARAMGMALAISVTLSGCSTVSDWFADEEELEIRRLKPIDAKFTPSVKWDRDIGDGVDHYFSRLRPVYAYENLYAADRHGSVVAMNPENGDVLWERDFAVFEGDGWWDSIARLWRSGASARIGGISVADRLLFVGTENGVVMALDYETGETKWEASVPGEVLAAPSADEGILVVNTGAGTLFGFDTRTGEQLWRHEGDTPPLTLRGISGPVAANGGALIGTPTGKLQVNLLESGILAWETVIATPTGATELERIVDLDTTPVLFGGTIYTVSYNGTLAAVELRSGRIIWKREYGSYRNLSIEGNSIFVVDNNSNIYALDRRNGVELWSQGSLKSRSVTAATPVGEHIVVGDNWGFVHWIEQETGQIVARVDVGGDDEDDAIYDAPLNVDGVVVTMTRNGVVAAISTL.

An N-terminal signal peptide occupies residues 1–28 (MFHNTCGRKGRFARAMGMALAISVTLSG). Residue Cys-29 is the site of N-palmitoyl cysteine attachment. Cys-29 carries S-diacylglycerol cysteine lipidation.

The protein belongs to the BamB family. As to quaternary structure, part of the Bam complex.

It is found in the cell outer membrane. In terms of biological role, part of the outer membrane protein assembly complex, which is involved in assembly and insertion of beta-barrel proteins into the outer membrane. This is Outer membrane protein assembly factor BamB from Alteromonas naphthalenivorans.